The sequence spans 384 residues: G protein-coupled receptor 88 (384 aa).

At 1-35 the chain is on the extracellular side; it reads MTNSSSTSTSSTTGGSLLLLCEEEESWAGRRIPVS. An N-linked (GlcNAc...) asparagine glycan is attached at N3. The chain crosses the membrane as a helical span at residues 36 to 56; it reads LLYSGLAIGGTLANGMVIYLV. Residues 57–73 lie on the Cytoplasmic side of the membrane; it reads SSFRKLQTTSNAFIVNG. The chain crosses the membrane as a helical span at residues 74–94; it reads CAADLSVCALWMPQEAVLGLL. The Extracellular segment spans residues 95–116; the sequence is PTGSAEPPADWDGAGGSYRLLR. The chain crosses the membrane as a helical span at residues 117–136; that stretch reads GGLLGLGLTVSLLSHCLVAL. At 137–158 the chain is on the cytoplasmic side; that stretch reads NRYLLITRAPATYQALYQRRHT. Residues 159 to 179 traverse the membrane as a helical segment; the sequence is AGMLALSWALALGLVLLLPPW. The Extracellular segment spans residues 180-195; sequence APRPGAAPPRVHYPAL. A helical transmembrane segment spans residues 196 to 216; sequence LAAAALLAQTALLLHCYLGIV. Over 217-285 the chain is Cytoplasmic; that stretch reads RRVRVSVKRV…RAQRRLSGLS (69 aa). A helical transmembrane segment spans residues 286–306; sequence VLLLCCVFLLATQPLVWVSLA. The Extracellular portion of the chain corresponds to 307-310; it reads SGFS. The chain crosses the membrane as a helical span at residues 311 to 331; sequence LPVPWGVQAASWLLCCALSAL. Residues 332–384 lie on the Cytoplasmic side of the membrane; it reads NPLLYTWRNEEFRRSVRSVLPGVGDAAAAAVAATAVPAVSQAQLGTRAAGQHW.

Belongs to the G-protein coupled receptor 1 family. Expressed predominantly in the striatum.

The protein resides in the cell membrane. It is found in the cell projection. The protein localises to the cilium membrane. It localises to the cytoplasm. Its subcellular location is the nucleus. Its function is as follows. Orphan G protein-coupled receptor implicated in a large repertoire of behavioral responses that engage motor activities, spatial learning, and emotional processing. May play a role in the regulation of cognitive and motor function. Couples with the heterotrimeric G protein complex of the G(i) subfamily, consisting of GNAI1, GNB1 and GNG2, thereby acting through a G(i)-mediated pathway. Plays a role in the attenuation of D1 dopamine receptor (D1R)-mediated cAMP response in ciliated cells. In non-ciliated cells, involved in the inhibition of the beta-2 adrenergic receptor (B2AR) response. This Homo sapiens (Human) protein is G protein-coupled receptor 88 (GPR88).